The primary structure comprises 76 residues: UPF0729 protein C18orf32 homolog (76 aa).

A necessary for its localzation to the endoplasmic reticulum and lipid droplets region spans residues 1–37 (MVCIPCIVIPVLLWVYKKFLEPYIYPLISPFVSRMWP). The span at 47–56 (KNKGKVDYKG) shows a compositional bias: basic and acidic residues. Residues 47-76 (KNKGKVDYKGADINGLPTRGPTEMCDKKKD) are disordered.

Belongs to the UPF0729 family. Interacts with DERL1 and AMFR. Post-translationally, undergoes ER-associated degradation (ERAD).

The protein resides in the endoplasmic reticulum. Its subcellular location is the lipid droplet. Functionally, may activate the NF-kappa-B signaling pathway. In Bos taurus (Bovine), this protein is UPF0729 protein C18orf32 homolog.